A 398-amino-acid chain; its full sequence is Candidapepsin-2 (398 aa).

The first 18 residues, 1 to 18 (MFLKNIFIGLAIALLVDA), serve as a signal peptide directing secretion. Residues 19-56 (TPTTTKRSAGFVALDFSVVKTPKAFPVTNGQEGKTSKR) constitute a propeptide, activation peptide. The region spanning 70–384 (YAADITVGSN…DLDNNEISLA (315 aa)) is the Peptidase A1 domain. The active site involves aspartate 88. 88-90 (DTG) lines the pepstatin A pocket. An intrachain disulfide couples cysteine 103 to cysteine 115. Pepstatin A is bound by residues 141–142 (GD) and 274–278 (DSGTT). Aspartate 274 is a catalytic residue. The cysteines at positions 312 and 350 are disulfide-linked. 2 N-linked (GlcNAc...) asparagine glycosylation sites follow: asparagine 313 and asparagine 321.

The protein belongs to the peptidase A1 family. In terms of assembly, monomer. Post-translationally, O-glycosylated.

Its subcellular location is the secreted. It catalyses the reaction Preferential cleavage at the carboxyl of hydrophobic amino acids, but fails to cleave 15-Leu-|-Tyr-16, 16-Tyr-|-Leu-17 and 24-Phe-|-Phe-25 of insulin B chain. Activates trypsinogen, and degrades keratin.. In Candida albicans (strain WO-1) (Yeast), this protein is Candidapepsin-2 (SAP2).